We begin with the raw amino-acid sequence, 93 residues long: Pancreatic polypeptide prohormone (93 aa).

The N-terminal stretch at 1 to 29 is a signal peptide; that stretch reads MPAACRCLFLLLLSACVALLLQPPLGTRG. A Tyrosine amide modification is found at Tyr-65. Positions 89 to 93 are excised as a propeptide; that stretch reads ELMDE.

It belongs to the NPY family.

The protein localises to the secreted. Hormone secreted by pancreatic cells that acts as a regulator of pancreatic and gastrointestinal functions probably by signaling through the G protein-coupled receptor NPY4R2. In Canis lupus familiaris (Dog), this protein is Pancreatic polypeptide prohormone (PPY).